The chain runs to 452 residues: Pup--protein ligase (452 aa).

Position 9 (glutamate 9) interacts with Mg(2+). An ATP-binding site is contributed by arginine 53. Residue tyrosine 55 participates in Mg(2+) binding. The active-site Proton acceptor is aspartate 57. Glutamate 63 provides a ligand contact to Mg(2+). ATP contacts are provided by threonine 66 and tryptophan 419.

Belongs to the Pup ligase/Pup deamidase family. Pup-conjugating enzyme subfamily.

The catalysed reaction is ATP + [prokaryotic ubiquitin-like protein]-L-glutamate + [protein]-L-lysine = ADP + phosphate + N(6)-([prokaryotic ubiquitin-like protein]-gamma-L-glutamyl)-[protein]-L-lysine.. It functions in the pathway protein degradation; proteasomal Pup-dependent pathway. The protein operates within protein modification; protein pupylation. In terms of biological role, catalyzes the covalent attachment of the prokaryotic ubiquitin-like protein modifier Pup to the proteasomal substrate proteins, thereby targeting them for proteasomal degradation. This tagging system is termed pupylation. The ligation reaction involves the side-chain carboxylate of the C-terminal glutamate of Pup and the side-chain amino group of a substrate lysine. The chain is Pup--protein ligase from Mycobacteroides abscessus (strain ATCC 19977 / DSM 44196 / CCUG 20993 / CIP 104536 / JCM 13569 / NCTC 13031 / TMC 1543 / L948) (Mycobacterium abscessus).